The following is a 382-amino-acid chain: Galactokinase (382 aa).

34-37 (EHTD) contacts substrate. 124-130 (GAGLSSS) provides a ligand contact to ATP. Mg(2+) contacts are provided by serine 130 and glutamate 162. Aspartate 174 (proton acceptor) is an active-site residue. A substrate-binding site is contributed by tyrosine 223.

The protein belongs to the GHMP kinase family. GalK subfamily.

It is found in the cytoplasm. It carries out the reaction alpha-D-galactose + ATP = alpha-D-galactose 1-phosphate + ADP + H(+). It functions in the pathway carbohydrate metabolism; galactose metabolism. Functionally, catalyzes the transfer of the gamma-phosphate of ATP to D-galactose to form alpha-D-galactose-1-phosphate (Gal-1-P). In Escherichia coli O17:K52:H18 (strain UMN026 / ExPEC), this protein is Galactokinase.